We begin with the raw amino-acid sequence, 336 residues long: MSKHFFLHNEFHWQGRHDAEDGAAGSRVHHVVQQIDYTHIGENPYGVALLGFACDAGVARNKGRIGAKKSPDLIRRALANLAWHSPHPLYDLGTVVCDDDLLESSQQHCAKIIAEVLPCVPVITLGGGHEVAWASFSGLARYFEQHHPEKAPKIGIINFDAHFDLRAFSSSQADVKPSSGTPFNQIQHYCQQQGWDFHYACLGVSKASNTRALFERAEQLNVWFVEDKDLGSVNHDYHLTQLQHFIDDCDYLYLTIDLDVFPAATAPGVSAPAARGVSYDNLAPFLDRILAHRDKLMLADIAEYNPTYDVDSQTARLAARLCWDIANAMNDKLEHQ.

H129, D160, H162, D164, D257, and D259 together coordinate Mn(2+).

The protein belongs to the arginase family. It depends on Mn(2+) as a cofactor.

The catalysed reaction is N-formimidoyl-L-glutamate + H2O = formamide + L-glutamate. The protein operates within amino-acid degradation; L-histidine degradation into L-glutamate; L-glutamate from N-formimidoyl-L-glutamate (hydrolase route): step 1/1. Functionally, catalyzes the conversion of N-formimidoyl-L-glutamate to L-glutamate and formamide. This chain is Formimidoylglutamase, found in Vibrio vulnificus (strain YJ016).